The chain runs to 536 residues: Octopamine receptor beta-2R (536 aa).

Residues 1-26 (MLLCDGLGPEPPRQRHRNRTSAARIR) form a disordered region. Residues 1-157 (MLLCDGLGPE…LDNIVWVFKA (157 aa)) are Extracellular-facing. The span at 14–26 (QRHRNRTSAARIR) shows a compositional bias: basic residues. Residues Asn18, Asn92, Asn113, and Asn126 are each glycosylated (N-linked (GlcNAc...) asparagine). Residues 158-178 (FVMLLIIIAAICGNLLVIISV) form a helical membrane-spanning segment. Residues 179–190 (MRVRKLRVITNY) are Cytoplasmic-facing. Residues 191–211 (FVVSLAMADIMVAIMAMTFNF) form a helical membrane-spanning segment. Residues 212–233 (SVQVTGRWNFSPFLCDLWNSLD) are Extracellular-facing. A helical transmembrane segment spans residues 234–256 (VYFSTASILHLCCISVDRYYAIV). Residues 257 to 270 (KPLKYPISMTKRVV) are Cytoplasmic-facing. Residues 271 to 291 (GIMLLNTWISPALLSFLPIFI) form a helical membrane-spanning segment. The Extracellular portion of the chain corresponds to 292–320 (GWYTTPQHQQFVIQNPTQCSFVVNKYYAV). Residues 321–341 (ISSSISFWIPCTIMIFTYLAI) traverse the membrane as a helical segment. Residues 342–412 (FREANRQEKQ…MKREHKAART (71 aa)) lie on the Cytoplasmic side of the membrane. The helical transmembrane segment at 413–433 (LGIIMGTFILCWLPFFLWYTL) threads the bilayer. Topologically, residues 434–444 (SMTCEECQVPD) are extracellular. The chain crosses the membrane as a helical span at residues 445–465 (IVVSILFWIGYFNSTLNPLIY). Over 466–536 (AYFNRDFREA…RRQSQMVDNL (71 aa)) the chain is Cytoplasmic.

Belongs to the G-protein coupled receptor 1 family. As to expression, in the adult, expressed in the superior protocerebrum and the optic lobe medulla of the central nervous system, nurse cells of egg chambers in the ovary at oogenic stages 1-10, and spermatogonia and spermatocytes in the testis. Expressed in the oviduct epithelium. Also expressed in the spermatheca. Expressed in embryonic and larval ventral nerve cord and brain lobe, embryonic and larval salivary glands and larval imaginal disk and midgut. Also expressed in larval synaptic boutons.

The protein localises to the cell membrane. In terms of biological role, autoreceptor for octopamine (OA), which is a neurotransmitter, neurohormone, and neuromodulator in invertebrates. Essential for ovulation and fertilization. During ovulation it mediates the OA-induced relaxation of the oviduct visceral muscles, by increasing cAMP levels and activating effectors such as calmodulin-dependent kinase II (CaMKII) and cAMP-dependent protein kinase A (PKA) pathways. Positively regulates synaptic growth; an action that is antagonized by Octbeta1R. The polypeptide is Octopamine receptor beta-2R (Drosophila melanogaster (Fruit fly)).